The primary structure comprises 282 residues: CD320 antigen (282 aa).

Positions 1–35 are cleaved as a signal peptide; the sequence is MSGGWMAQVGAWRTGALGLALLLLLGLGLGLEAAA. The Extracellular segment spans residues 36–229; that stretch reads SPLSTPTSAQ…GDQSGSPTAY (194 aa). Residues 53–90 enclose the LDL-receptor class A 1 domain; the sequence is SCPPTKFQCRTSGLCVPLTWRCDRDLDCSDGSDEEECR. 3 disulfide bridges follow: cysteine 54/cysteine 67, cysteine 61/cysteine 80, and cysteine 74/cysteine 89. Tryptophan 72, aspartate 75, aspartate 77, aspartate 79, aspartate 85, and glutamate 86 together coordinate Ca(2+). N-linked (GlcNAc...) asparagine glycosylation occurs at asparagine 126. The LDL-receptor class A 2 domain maps to 131-168; it reads ACLAGELRCTLSDDCIPLTWRCDGHPDCPDSSDELGCG. 3 disulfide bridges follow: cysteine 132–cysteine 145, cysteine 139–cysteine 158, and cysteine 152–cysteine 167. The Ca(2+) site is built by tryptophan 150, aspartate 153, histidine 155, aspartate 157, aspartate 163, and glutamate 164. 2 N-linked (GlcNAc...) asparagine glycosylation sites follow: asparagine 195 and asparagine 213. A disordered region spans residues 199–223; the sequence is MGPPVTLESVPSVGNATSSSAGDQS. The span at 210 to 223 shows a compositional bias: polar residues; the sequence is SVGNATSSSAGDQS. A helical membrane pass occupies residues 230 to 250; the sequence is GVIAAAAVLSASLVTATLLLL. At 251–282 the chain is on the cytoplasmic side; that stretch reads SWLRAQERLRPLGLLVAMKESLLLSEQKTSLP.

As to quaternary structure, interacts (via LDL-receptor class A domains) with TCN2. In terms of tissue distribution, detected in the germinal center (GC) of lymphoid follicles (at protein level). Expressed abundantly on follicular dendritic cells (FDCs).

Its subcellular location is the cell membrane. Receptor for transcobalamin saturated with cobalamin (TCbl). Plays an important role in cobalamin uptake. Plasma membrane protein that is expressed on follicular dendritic cells (FDC) and mediates interaction with germinal center B cells. Functions as costimulator to promote B cell responses to antigenic stimuli; promotes B cell differentiation and proliferation. Germinal center-B (GC-B) cells differentiate into memory B-cells and plasma cells (PC) through interaction with T-cells and follicular dendritic cells (FDC). CD320 augments the proliferation of PC precursors generated by IL-10. In Homo sapiens (Human), this protein is CD320 antigen (CD320).